The primary structure comprises 141 residues: Putative pre-16S rRNA nuclease (141 aa).

This sequence belongs to the YqgF nuclease family.

Its subcellular location is the cytoplasm. Could be a nuclease involved in processing of the 5'-end of pre-16S rRNA. This is Putative pre-16S rRNA nuclease from Pseudomonas putida (strain ATCC 47054 / DSM 6125 / CFBP 8728 / NCIMB 11950 / KT2440).